A 1097-amino-acid polypeptide reads, in one-letter code: DNA-directed RNA polymerase subunit beta (1097 aa).

The disordered stretch occupies residues 1072–1097 (QDVNPRRSTPSRPTYESLGVADYDED).

This sequence belongs to the RNA polymerase beta chain family. In terms of assembly, in cyanobacteria the RNAP catalytic core is composed of 2 alpha, 1 beta, 1 beta', 1 gamma and 1 omega subunit. When a sigma factor is associated with the core the holoenzyme is formed, which can initiate transcription.

It carries out the reaction RNA(n) + a ribonucleoside 5'-triphosphate = RNA(n+1) + diphosphate. DNA-dependent RNA polymerase catalyzes the transcription of DNA into RNA using the four ribonucleoside triphosphates as substrates. This chain is DNA-directed RNA polymerase subunit beta, found in Synechococcus sp. (strain CC9605).